A 465-amino-acid chain; its full sequence is Gamma-aminobutyric acid receptor subunit rho-2 (465 aa).

Positions methionine 1–serine 20 are cleaved as a signal peptide. The Extracellular portion of the chain corresponds to arginine 21 to histidine 260. Arginine 105 contributes to the 4-aminobutanoate binding site. An N-linked (GlcNAc...) asparagine glycan is attached at asparagine 120. 4-aminobutanoate is bound at residue serine 169. A disulfide bond links cysteine 178 and cysteine 192. Glutamate 197 serves as a coordination point for 4-aminobutanoate. An N-linked (GlcNAc...) asparagine glycan is attached at asparagine 254. The chain crosses the membrane as a helical span at residues isoleucine 261–valine 281. Residues serine 282–arginine 293 lie on the Cytoplasmic side of the membrane. Residues valine 294–serine 314 traverse the membrane as a helical segment. Over methionine 315–aspartate 325 the chain is Extracellular. A helical transmembrane segment spans residues isoleucine 326 to asparagine 346. Over tyrosine 347–lysine 443 the chain is Cytoplasmic. Residues tyrosine 444–phenylalanine 464 traverse the membrane as a helical segment. Position 465 (serine 465) is a topological domain, extracellular.

This sequence belongs to the ligand-gated ion channel (TC 1.A.9) family. Gamma-aminobutyric acid receptor (TC 1.A.9.5) subfamily. GABRR2 sub-subfamily. Three rho subunits (rho-1/GBRR1, rho-2/GBRR2 and rho-3/GBRR3) coassemble either to form functional homopentamers or heteropentamers. Rho-2 is unable to form a functional homopentamer. Interacts with SQSTM1. Expressed in the cerebellum.

The protein localises to the postsynaptic cell membrane. Its subcellular location is the cell membrane. It catalyses the reaction chloride(in) = chloride(out). In terms of biological role, rho subunit of the pentameric ligand-gated chloride channels responsible for mediating the effects of gamma-aminobutyric acid (GABA), the major inhibitory neurotransmitter in the brain. Rho-containing GABA-gated chloride channels are a subclass of GABA(A) receptors (GABAARs) entirely composed of rho subunits, where GABA molecules bind at the rho intersubunit interfaces. When activated by GABA, rho-GABAARs selectively allow the flow of chloride anions across the cell membrane down their electrochemical gradient. Rho-2 GABAARs may contribute to the regulation of glial development in the cerebellum by controlling extrasynaptic transmission. Rho-2 GABAARs are also involved in neuronal tonic (extrasynaptic) and phasic (synaptic) transmission in the Purkinje neurons of the cerebellum. Rho-2 GABAARs expressed in retina may play a role in retinal neurotransmission. This Mus musculus (Mouse) protein is Gamma-aminobutyric acid receptor subunit rho-2.